Reading from the N-terminus, the 604-residue chain is Asparagine synthetase [glutamine-hydrolyzing] 1 (604 aa).

The active-site Nucleophile is the cysteine 2. A Glutamine amidotransferase type-2 domain is found at cysteine 2 to glycine 186. L-glutamine contacts are provided by residues arginine 50–valine 54, asparagine 75–glutamate 77, and aspartate 99. Positions leucine 211–lysine 451 constitute an Asparagine synthetase domain. Residues leucine 232, valine 268, and serine 342–glycine 343 each bind ATP.

It carries out the reaction L-aspartate + L-glutamine + ATP + H2O = L-asparagine + L-glutamate + AMP + diphosphate + H(+). It participates in amino-acid biosynthesis; L-asparagine biosynthesis. In terms of biological role, essential for nitrogen assimilation, distribution and remobilization within the plant via the phloem. This is Asparagine synthetase [glutamine-hydrolyzing] 1 from Oryza sativa subsp. japonica (Rice).